Consider the following 381-residue polypeptide: Mannitol-1-phosphate 5-dehydrogenase (381 aa).

3 to 14 (TLHFGAGNIGRG) contributes to the NAD(+) binding site.

This sequence belongs to the mannitol dehydrogenase family.

The enzyme catalyses D-mannitol 1-phosphate + NAD(+) = beta-D-fructose 6-phosphate + NADH + H(+). This is Mannitol-1-phosphate 5-dehydrogenase from Aeromonas salmonicida (strain A449).